The chain runs to 439 residues: Serine/threonine-protein kinase 2 (439 aa).

The 353-residue stretch at N87 to N439 folds into the Protein kinase domain. Residues I93–V101 and K117 contribute to the ATP site. D307 acts as the Proton acceptor in catalysis.

Belongs to the protein kinase superfamily. Ser/Thr protein kinase family. Poxviruses subfamily. Phosphorylated in vivo. Autophosphorylated in vitro.

It is found in the host endoplasmic reticulum. The protein localises to the host endoplasmic reticulum-Golgi intermediate compartment. It carries out the reaction L-seryl-[protein] + ATP = O-phospho-L-seryl-[protein] + ADP + H(+). The catalysed reaction is L-threonyl-[protein] + ATP = O-phospho-L-threonyl-[protein] + ADP + H(+). In terms of biological role, essential serine-protein kinase involved in the early stage of virion morphogenesis. The chain is Serine/threonine-protein kinase 2 (OPG054) from Vaccinia virus (strain Ankara) (VACV).